Here is a 61-residue protein sequence, read N- to C-terminus: Protein TfaX (61 aa).

It belongs to the tfa family.

Might play a role in cell growth during glycolysis. The polypeptide is Protein TfaX (tfaX) (Escherichia coli (strain K12)).